The following is a 235-amino-acid chain: tRNA (guanine-N(1)-)-methyltransferase (235 aa).

Residues Gly-114 and 134–139 each bind S-adenosyl-L-methionine; that span reads IGDYIL.

It belongs to the RNA methyltransferase TrmD family. As to quaternary structure, homodimer.

The protein localises to the cytoplasm. It carries out the reaction guanosine(37) in tRNA + S-adenosyl-L-methionine = N(1)-methylguanosine(37) in tRNA + S-adenosyl-L-homocysteine + H(+). Specifically methylates guanosine-37 in various tRNAs. In Ehrlichia ruminantium (strain Gardel), this protein is tRNA (guanine-N(1)-)-methyltransferase.